The chain runs to 261 residues: 4-hydroxy-tetrahydrodipicolinate reductase (261 aa).

Residues 11 to 16 (GFTGAM), 96 to 98 (GTT), and 122 to 125 (APNF) contribute to the NAD(+) site. The Proton donor/acceptor role is filled by His152. His153 serves as a coordination point for (S)-2,3,4,5-tetrahydrodipicolinate. The active-site Proton donor is the Lys156. Residue 162–163 (GT) participates in (S)-2,3,4,5-tetrahydrodipicolinate binding.

This sequence belongs to the DapB family.

It localises to the cytoplasm. It catalyses the reaction (S)-2,3,4,5-tetrahydrodipicolinate + NAD(+) + H2O = (2S,4S)-4-hydroxy-2,3,4,5-tetrahydrodipicolinate + NADH + H(+). The enzyme catalyses (S)-2,3,4,5-tetrahydrodipicolinate + NADP(+) + H2O = (2S,4S)-4-hydroxy-2,3,4,5-tetrahydrodipicolinate + NADPH + H(+). The protein operates within amino-acid biosynthesis; L-lysine biosynthesis via DAP pathway; (S)-tetrahydrodipicolinate from L-aspartate: step 4/4. In terms of biological role, catalyzes the conversion of 4-hydroxy-tetrahydrodipicolinate (HTPA) to tetrahydrodipicolinate. In Lactobacillus acidophilus (strain ATCC 700396 / NCK56 / N2 / NCFM), this protein is 4-hydroxy-tetrahydrodipicolinate reductase.